A 732-amino-acid polypeptide reads, in one-letter code: MAP7 domain-containing protein 2 (732 aa).

N-acetylmethionine is present on M1. Gly residues predominate over residues 1–10 (MERGGGGSGT). 5 disordered regions span residues 1–64 (MERG…RREE), 95–123 (WRKLEEQRQREDQKRAAVEEKRKQKLREE), 157–186 (PGGHDACDKLSTSTMSLPKPTEPPMNKRLS), 210–244 (GPLNPSYKSSPTRNIEKKKATSTSTSGAGDVGKEA), and 279–509 (EFSG…KQKE). Over residues 49 to 64 (LKSDERQRLAKERREE) the composition is skewed to basic and acidic residues. Residues 51-146 (SDERQRLAKE…RTQQLELKKK (96 aa)) adopt a coiled-coil conformation. The segment covering 329-345 (MPKRKAEKEKSNKEREG) has biased composition (basic and acidic residues). The span at 347–357 (LAQQAAGPQGE) shows a compositional bias: low complexity. The span at 359–374 (ALEKHVVDKHASEKHA) shows a compositional bias: basic and acidic residues. Low complexity predominate over residues 375 to 386 (AAAGGKAENSAA). Over residues 404-509 (LAEKRRQARL…EKAMIEKQKE (106 aa)) the composition is skewed to basic and acidic residues.

It belongs to the MAP7 family. In terms of assembly, interacts (via N-terminus) with microtubules; facilitates microtubule stabilization. Interacts with kinesin-1 family members, KIF5A, KIF5B and KIF5C.

It localises to the cytoplasm. It is found in the cytoskeleton. Its subcellular location is the microtubule organizing center. The protein localises to the centrosome. The protein resides in the midbody. It localises to the cell projection. It is found in the neuron projection. Its subcellular location is the axon. Functionally, microtubule-stabilizing protein that plays a role in the control of cell motility and neurite outgrowth via direct binding to the microtubule. Acts as a critical cofactor for kinesin transport. In the proximal axon, regulates kinesin-1 family members, KIF5A, KIF5B and KIF5C recruitment to microtubules and contributes to kinesin-1-mediated transport in the axons. The sequence is that of MAP7 domain-containing protein 2 (MAP7D2) from Homo sapiens (Human).